The following is a 241-amino-acid chain: 1-(5-phosphoribosyl)-5-[(5-phosphoribosylamino)methylideneamino] imidazole-4-carboxamide isomerase (241 aa).

Aspartate 10 (proton acceptor) is an active-site residue. Aspartate 131 serves as the catalytic Proton donor.

Belongs to the HisA/HisF family.

The protein resides in the cytoplasm. The enzyme catalyses 1-(5-phospho-beta-D-ribosyl)-5-[(5-phospho-beta-D-ribosylamino)methylideneamino]imidazole-4-carboxamide = 5-[(5-phospho-1-deoxy-D-ribulos-1-ylimino)methylamino]-1-(5-phospho-beta-D-ribosyl)imidazole-4-carboxamide. The protein operates within amino-acid biosynthesis; L-histidine biosynthesis; L-histidine from 5-phospho-alpha-D-ribose 1-diphosphate: step 4/9. This chain is 1-(5-phosphoribosyl)-5-[(5-phosphoribosylamino)methylideneamino] imidazole-4-carboxamide isomerase, found in Hyphomonas neptunium (strain ATCC 15444).